Reading from the N-terminus, the 382-residue chain is Zinc metalloproteinase nas-7 (382 aa).

An N-terminal signal peptide occupies residues 1-18; sequence MLLPWIITIVTVIPATLG. A propeptide spanning residues 19–79 is cleaved from the precursor; the sequence is HRNRVQDDEM…DIRLPRRHKR (61 aa). The Peptidase M12A domain occupies 80–273; that stretch reads NGVSRAAKLW…SKINRMYNCP (194 aa). 5 disulfides stabilise this stretch: C122–C272, C144–C163, C348–C382, C355–C375, and C362–C379. H171 contributes to the Zn(2+) binding site. Residue E172 is part of the active site. H175 and H181 together coordinate Zn(2+). The region spanning 348 to 382 is the ShKT domain; the sequence is CEDRITVCWWTADRCRSPAIYQVMSSLCPKTCKFC.

Zn(2+) serves as cofactor. Expressed in the head of adult hermaphrodites but not within pharynx cells. Expressed in pharyngeal muscles, mc cells, intestine, hypodermal seam cells, arcade cells, spermatheca, vulva and rectal epithelial cells.

The protein localises to the secreted. In terms of biological role, metalloprotease. This is Zinc metalloproteinase nas-7 (nas-7) from Caenorhabditis elegans.